Reading from the N-terminus, the 233-residue chain is Large ribosomal subunit protein uL1 (233 aa).

The protein belongs to the universal ribosomal protein uL1 family. In terms of assembly, part of the 50S ribosomal subunit.

Its function is as follows. Binds directly to 23S rRNA. The L1 stalk is quite mobile in the ribosome, and is involved in E site tRNA release. Protein L1 is also a translational repressor protein, it controls the translation of the L11 operon by binding to its mRNA. In Geobacillus sp. (strain WCH70), this protein is Large ribosomal subunit protein uL1.